The following is a 482-amino-acid chain: uncharacterized protein (482 aa).

2 WD repeats span residues aspartate 92–isoleucine 133 and glycine 191–lysine 230.

The protein localises to the cytoplasm. Its subcellular location is the nucleus. This is an uncharacterized protein from Schizosaccharomyces pombe (strain 972 / ATCC 24843) (Fission yeast).